The sequence spans 107 residues: Thiosulfate sulfurtransferase GlpE (107 aa).

A Rhodanese domain is found at 17–105; that stretch reads ADDNALLVDI…WRIAFPQQVS (89 aa). The active-site Cysteine persulfide intermediate is C65.

The protein belongs to the GlpE family.

The protein resides in the cytoplasm. It carries out the reaction thiosulfate + hydrogen cyanide = thiocyanate + sulfite + 2 H(+). The enzyme catalyses thiosulfate + [thioredoxin]-dithiol = [thioredoxin]-disulfide + hydrogen sulfide + sulfite + 2 H(+). In terms of biological role, transferase that catalyzes the transfer of sulfur from thiosulfate to thiophilic acceptors such as cyanide or dithiols. May function in a CysM-independent thiosulfate assimilation pathway by catalyzing the conversion of thiosulfate to sulfite, which can then be used for L-cysteine biosynthesis. In Erwinia tasmaniensis (strain DSM 17950 / CFBP 7177 / CIP 109463 / NCPPB 4357 / Et1/99), this protein is Thiosulfate sulfurtransferase GlpE.